The sequence spans 679 residues: Sodium-dependent phosphate transporter 1 (679 aa).

6 helical membrane-spanning segments follow: residues 21–41 (YLWMLILGFIIAFVLAFSVGA), 62–82 (ACILASIFETVGSVLLGAKVS), 100–120 (GLLMAGSVSAMFGSAVWQLVA), 158–178 (IVMSWFVSPLLSGIMSGILFF), 203–223 (ACTVGINLFSIMYTGAPLLGF), and 230–250 (GTILISVGCAVFCALIVWFFV). A phosphoserine mark is found at serine 265 and serine 269. Transmembrane regions (helical) follow at residues 511–531 (VSLLFQFLQILTACFGSFAHG), 558–578 (VATPIWLLLYGGVGICVGLWV), 600–620 (FSIELASALTVVIASNIGLPI), and 650–670 (IFMAWFVTVPISGVISAAIMA). Residues 550–558 (DTGDVSSKV) are a.

This sequence belongs to the inorganic phosphate transporter (PiT) (TC 2.A.20) family. As to expression, ubiquitously expressed.

It is found in the cell membrane. The catalysed reaction is 2 Na(+)(out) + phosphate(out) = 2 Na(+)(in) + phosphate(in). Functionally, sodium-phosphate symporter which preferentially transports the monovalent form of phosphate with a stoichiometry of two sodium ions per phosphate ion. May play a role in extracellular matrix and cartilage calcification as well as in vascular calcification. Essential for cell proliferation but this function is independent of its phosphate transporter activity. Its function is as follows. (Microbial infection) May function as a retroviral receptor as it confers human cells susceptibility to infection to Gibbon Ape Leukemia Virus (GaLV), Simian sarcoma-associated virus (SSAV) and Feline leukemia virus subgroup B (FeLV-B) as well as 10A1 murine leukemia virus (10A1 MLV). The polypeptide is Sodium-dependent phosphate transporter 1 (SLC20A1) (Homo sapiens (Human)).